The primary structure comprises 96 residues: MQLYTYLYLLVPLVTFHLILGTGTLDHGDALTERRSADATALKPEPVLLQKSSARSTDDNGKDTQMKRIFKKRRNKARGEEELSENAVEFARELAN.

The first 21 residues, 1–21 (MQLYTYLYLLVPLVTFHLILG), serve as a signal peptide directing secretion. Residues 22–78 (TGTLDHGDALTERRSADATALKPEPVLLQKSSARSTDDNGKDTQMKRIFKKRRNKAR) constitute a propeptide that is removed on maturation. The tract at residues 36–85 (SADATALKPEPVLLQKSSARSTDDNGKDTQMKRIFKKRRNKARGEEELSE) is disordered. Residues 56–66 (STDDNGKDTQM) are compositionally biased toward basic and acidic residues. An a divalent metal cation-binding site is contributed by Glu81. 4-carboxyglutamate is present on residues Glu81, Glu82, Glu85, Glu89, and Glu93. A divalent metal cation contacts are provided by Glu85, Glu89, and Glu93. Asparagine amide is present on Asn96.

Belongs to the conotoxin B superfamily. Ca(2+) is required as a cofactor. Requires Mg(2+) as cofactor. Expressed by the venom duct.

It localises to the secreted. Functionally, conantokins inhibit N-methyl-D-aspartate (NMDA) receptors. This toxin has antagonist activity on NR2B/GRIN2B (IC(50)=1.4 uM) and NR2A/GRIN2A (IC(50)=2.9 uM) subunits, when tested on rat receptors. This Conus rolani (Cone snail) protein is Conantokin Rl-C.